Here is a 131-residue protein sequence, read N- to C-terminus: Aspartate 1-decarboxylase (131 aa).

Serine 25 acts as the Schiff-base intermediate with substrate; via pyruvic acid in catalysis. Pyruvic acid (Ser) is present on serine 25. Residue threonine 57 participates in substrate binding. Tyrosine 58 acts as the Proton donor in catalysis. Position 73 to 75 (glycine 73 to alanine 75) interacts with substrate.

This sequence belongs to the PanD family. As to quaternary structure, heterooctamer of four alpha and four beta subunits. Requires pyruvate as cofactor. Post-translationally, is synthesized initially as an inactive proenzyme, which is activated by self-cleavage at a specific serine bond to produce a beta-subunit with a hydroxyl group at its C-terminus and an alpha-subunit with a pyruvoyl group at its N-terminus.

It localises to the cytoplasm. It carries out the reaction L-aspartate + H(+) = beta-alanine + CO2. It functions in the pathway cofactor biosynthesis; (R)-pantothenate biosynthesis; beta-alanine from L-aspartate: step 1/1. Catalyzes the pyruvoyl-dependent decarboxylation of aspartate to produce beta-alanine. This Anaeromyxobacter sp. (strain K) protein is Aspartate 1-decarboxylase.